An 81-amino-acid chain; its full sequence is Carboxysome shell vertex protein CsoS4B (81 aa).

A BMV domain is found at 1–77 (MEVMRVRSDL…TDLTIGGIID (77 aa)).

This sequence belongs to the CcmL/EutN family. CsoS4 subfamily. As to quaternary structure, homopentamer.

Its subcellular location is the carboxysome. Probably forms vertices in the carboxysome. Has been modeled to induce curvature upon insertion into an otherwise flat hexagonal layer of major carboxysome subunits. A minor shell protein, only 12 pentamers of CsoS4A/CsoS4B are calculated to be present in each carboxysome. The 2 CsoS4 proteins contribute to the impermeability of the carboxysome to CO(2). Its central pore is probably too small to allow passage of metabolites; its function might be to anchor different proteins or metabolites to the carboxysome. Functionally, unlike beta-carboxysomes, alpha-carboxysomes (Cb) can form without cargo protein. CsoS2 is essential for Cb formation and is also capable of targeting foreign proteins to the Cb. The Cb shell assembles with the aid of CsoS2; CsoS1A, CsoS1B and CsoS1C form the majority of the shell while CsoS4A and CsoS4B form vertices. CsoS1D forms pseudohexamers that probably control metabolite flux into and out of the shell. This Halothiobacillus neapolitanus (strain ATCC 23641 / c2) (Thiobacillus neapolitanus) protein is Carboxysome shell vertex protein CsoS4B.